Consider the following 244-residue polypeptide: Triosephosphate isomerase (244 aa).

8-10 (NWK) is a binding site for substrate. The Electrophile role is filled by His93. Glu161 functions as the Proton acceptor in the catalytic mechanism. Substrate-binding positions include Gly167, Ser206, and 227 to 228 (GG).

The protein belongs to the triosephosphate isomerase family. As to quaternary structure, homodimer.

The protein resides in the cytoplasm. It catalyses the reaction D-glyceraldehyde 3-phosphate = dihydroxyacetone phosphate. Its pathway is carbohydrate biosynthesis; gluconeogenesis. It participates in carbohydrate degradation; glycolysis; D-glyceraldehyde 3-phosphate from glycerone phosphate: step 1/1. In terms of biological role, involved in the gluconeogenesis. Catalyzes stereospecifically the conversion of dihydroxyacetone phosphate (DHAP) to D-glyceraldehyde-3-phosphate (G3P). In Deinococcus radiodurans (strain ATCC 13939 / DSM 20539 / JCM 16871 / CCUG 27074 / LMG 4051 / NBRC 15346 / NCIMB 9279 / VKM B-1422 / R1), this protein is Triosephosphate isomerase.